We begin with the raw amino-acid sequence, 441 residues long: UDP-N-acetylglucosamine--peptide N-acetylglucosaminyltransferase stabilizing protein GtfB (441 aa).

Belongs to the GtfB family. Forms a heterotetramer with 2 subunits each of GtfA and GtfB. Part of the accessory SecA2/SecY2 protein translocation apparatus.

Its subcellular location is the cell membrane. It functions in the pathway protein modification; protein glycosylation. In terms of biological role, required for polymorphic O-glycosylation of the serine-rich repeat protein (SRRP) in this bacteria. A stabilizing protein that is part of the accessory SecA2/SecY2 system specifically required to export serine-rich repeat cell wall proteins encoded in the same operon. The GtfA-GtfB complex adds GlcNAc from UDP-GlcNAc to the substrate protein, attaching the first sugar residue. Stabilizes the glycosylation activity of GtfA. Has no N-acetylglucosaminyl transferase activity on its own. The polypeptide is UDP-N-acetylglucosamine--peptide N-acetylglucosaminyltransferase stabilizing protein GtfB (Limosilactobacillus reuteri subsp. suis (strain ATCC 53608 / LMG 31752 / 1063) (Lactobacillus reuteri)).